A 124-amino-acid polypeptide reads, in one-letter code: Astakine (124 aa).

The signal sequence occupies residues 1 to 21 (MAVSSAVRMLSVACLVVSAAG). 5 disulfides stabilise this stretch: C28/C40, C34/C52, C39/C91, C62/C99, and C93/C106.

The protein belongs to the AVIT (prokineticin) family.

The protein localises to the secreted. Functionally, cytokine directly involved in hematopoiesis. This chain is Astakine, found in Penaeus monodon (Giant tiger prawn).